We begin with the raw amino-acid sequence, 286 residues long: Energy-coupling factor transporter ATP-binding protein EcfA2 (286 aa).

In terms of domain architecture, ABC transporter spans 3 to 244 (IKVENVSFIY…AERLEKIGLS (242 aa)). 40–47 (GHTGSGKS) is an ATP binding site.

The protein belongs to the ABC transporter superfamily. Energy-coupling factor EcfA family. Forms a stable energy-coupling factor (ECF) transporter complex composed of 2 membrane-embedded substrate-binding proteins (S component), 2 ATP-binding proteins (A component) and 2 transmembrane proteins (T component).

It localises to the cell membrane. Its function is as follows. ATP-binding (A) component of a common energy-coupling factor (ECF) ABC-transporter complex. Unlike classic ABC transporters this ECF transporter provides the energy necessary to transport a number of different substrates. The polypeptide is Energy-coupling factor transporter ATP-binding protein EcfA2 (Caldanaerobacter subterraneus subsp. tengcongensis (strain DSM 15242 / JCM 11007 / NBRC 100824 / MB4) (Thermoanaerobacter tengcongensis)).